The chain runs to 131 residues: Leptin receptor overlapping transcript-like 1 (131 aa).

A run of 4 helical transmembrane segments spans residues 7–27, 32–52, 69–89, and 100–120; these read LISL…GCAL, QYWP…YCIA, LAIF…IVFA, and ALVL…FLVF.

The protein belongs to the OB-RGRP/VPS55 family.

Its subcellular location is the membrane. Functionally, negatively regulates growth hormone (GH) receptor cell surface expression in liver. May play a role in liver resistance to GH during periods of reduced nutrient availability. In Bos taurus (Bovine), this protein is Leptin receptor overlapping transcript-like 1 (LEPROTL1).